Reading from the N-terminus, the 429-residue chain is Ubiquinone hydroxylase UbiL (429 aa).

Residues 1 to 22 are disordered; sequence MSEPLLRGLAAGDPPSATGPVT.

This sequence belongs to the UbiH/COQ6 family. Requires FAD as cofactor.

It carries out the reaction a 2-(all-trans-polyprenyl)phenol + NADPH + O2 + H(+) = a 3-(all-trans-polyprenyl)benzene-1,2-diol + NADP(+) + H2O. The protein operates within cofactor biosynthesis; ubiquinone biosynthesis. In terms of biological role, catalyzes the hydroxylation of two positions of the aromatic ring during ubiquinone biosynthesis. The sequence is that of Ubiquinone hydroxylase UbiL from Rhodospirillum rubrum (strain ATCC 11170 / ATH 1.1.1 / DSM 467 / LMG 4362 / NCIMB 8255 / S1).